Reading from the N-terminus, the 332-residue chain is Phosphate acyltransferase (332 aa).

This sequence belongs to the PlsX family. Homodimer. Probably interacts with PlsY.

It localises to the cytoplasm. It catalyses the reaction a fatty acyl-[ACP] + phosphate = an acyl phosphate + holo-[ACP]. It participates in lipid metabolism; phospholipid metabolism. In terms of biological role, catalyzes the reversible formation of acyl-phosphate (acyl-PO(4)) from acyl-[acyl-carrier-protein] (acyl-ACP). This enzyme utilizes acyl-ACP as fatty acyl donor, but not acyl-CoA. The polypeptide is Phosphate acyltransferase (Streptococcus mutans serotype c (strain ATCC 700610 / UA159)).